We begin with the raw amino-acid sequence, 1368 residues long: DNA-directed RNA polymerase subunit beta (1368 aa).

This sequence belongs to the RNA polymerase beta chain family. In terms of assembly, the RNAP catalytic core consists of 2 alpha, 1 beta, 1 beta' and 1 omega subunit. When a sigma factor is associated with the core the holoenzyme is formed, which can initiate transcription.

It catalyses the reaction RNA(n) + a ribonucleoside 5'-triphosphate = RNA(n+1) + diphosphate. DNA-dependent RNA polymerase catalyzes the transcription of DNA into RNA using the four ribonucleoside triphosphates as substrates. This is DNA-directed RNA polymerase subunit beta from Paraburkholderia phytofirmans (strain DSM 17436 / LMG 22146 / PsJN) (Burkholderia phytofirmans).